Reading from the N-terminus, the 80-residue chain is Transcription elongation factor 1 homolog (80 aa).

4 residues coordinate Zn(2+): cysteine 25, cysteine 28, cysteine 49, and cysteine 52.

The protein belongs to the ELOF1 family.

The protein resides in the nucleus. Its function is as follows. Transcription elongation factor implicated in the maintenance of proper chromatin structure in actively transcribed regions. This is Transcription elongation factor 1 homolog from Encephalitozoon cuniculi (strain GB-M1) (Microsporidian parasite).